Reading from the N-terminus, the 188-residue chain is Elongation factor P (188 aa).

Lys34 carries the post-translational modification N6-(3,6-diaminohexanoyl)-5-hydroxylysine.

The protein belongs to the elongation factor P family. Post-translationally, may be beta-lysylated on the epsilon-amino group of Lys-34 by the combined action of EpmA and EpmB, and then hydroxylated on the C5 position of the same residue by EpmC (if this protein is present). Lysylation is critical for the stimulatory effect of EF-P on peptide-bond formation. The lysylation moiety may extend toward the peptidyltransferase center and stabilize the terminal 3-CCA end of the tRNA. Hydroxylation of the C5 position on Lys-34 may allow additional potential stabilizing hydrogen-bond interactions with the P-tRNA.

The protein localises to the cytoplasm. It participates in protein biosynthesis; polypeptide chain elongation. Its function is as follows. Involved in peptide bond synthesis. Alleviates ribosome stalling that occurs when 3 or more consecutive Pro residues or the sequence PPG is present in a protein, possibly by augmenting the peptidyl transferase activity of the ribosome. Modification of Lys-34 is required for alleviation. The sequence is that of Elongation factor P from Actinobacillus pleuropneumoniae serotype 5b (strain L20).